The following is a 714-amino-acid chain: Cadherin-13 (714 aa).

The first 22 residues, 1-22 (MQPRTPLTLCVLLSQVLLVTSA), serve as a signal peptide directing secretion. Residues 23-138 (DDLECTPGFQ…RTSPVPRQKR (116 aa)) constitute a propeptide that is removed on maturation. Cadherin domains lie at 143-245 (SPIL…RPIF), 246-363 (REGP…SPKF), 364-477 (TKKE…GPVF), 478-585 (YPDP…APVI), and 586-680 (YPTV…VQVC). Residues 156 to 183 (PRDVGKVVDSDRPEGSKFRLTGKGVDQD) are disordered. Over residues 158–172 (DVGKVVDSDRPEGSK) the composition is skewed to basic and acidic residues. N382, N489, N500, N530, N598, N638, and N671 each carry an N-linked (GlcNAc...) asparagine glycan. G693 carries GPI-anchor amidated glycine lipidation. A propeptide spans 694–714 (ALHLSLSLLLLFSLLSLLSGL) (removed in mature form).

As to quaternary structure, by contrast to classical cadherins, homodimerization in trans is not mediated by cadherin EC1 domain strand-swapping, but instead through a homophilic adhesive interface which joins two elongated EC1-EC2 domains through a region near their Ca2+-binding sites to form a tetrahedral, X-like shape.

It is found in the cell membrane. Its subcellular location is the cytoplasm. Its function is as follows. Cadherins are calcium-dependent cell adhesion proteins. They preferentially interact with themselves in a homophilic manner in connecting cells; cadherins may thus contribute to the sorting of heterogeneous cell types. May act as a negative regulator of neural cell growth. The chain is Cadherin-13 (Cdh13) from Mus musculus (Mouse).